A 420-amino-acid polypeptide reads, in one-letter code: Tyrosine--tRNA ligase (420 aa).

Tyr33 is a binding site for L-tyrosine. The 'HIGH' region signature appears at 38–47; that stretch reads PTGDSLHAGH. 2 residues coordinate L-tyrosine: Tyr167 and Gln171. Positions 227 to 231 match the 'KMSKS' region motif; that stretch reads KFGKS. Lys230 is an ATP binding site. One can recognise an S4 RNA-binding domain in the interval 352-418; it reads PTIIDLLIGA…GKKNFAGVKY (67 aa).

The protein belongs to the class-I aminoacyl-tRNA synthetase family. TyrS type 1 subfamily. Homodimer.

The protein resides in the cytoplasm. It carries out the reaction tRNA(Tyr) + L-tyrosine + ATP = L-tyrosyl-tRNA(Tyr) + AMP + diphosphate + H(+). Its function is as follows. Catalyzes the attachment of tyrosine to tRNA(Tyr) in a two-step reaction: tyrosine is first activated by ATP to form Tyr-AMP and then transferred to the acceptor end of tRNA(Tyr). This Corynebacterium diphtheriae (strain ATCC 700971 / NCTC 13129 / Biotype gravis) protein is Tyrosine--tRNA ligase.